We begin with the raw amino-acid sequence, 164 residues long: Aspartic proteinase nepenthesin-1 (164 aa).

The Peptidase A1 domain occupies 17–164 (YLMXLSIGTP…VSFVSAQCGA (148 aa)). D35 is an active-site residue. An N-linked (GlcNAc...) asparagine glycan is attached at N93.

It belongs to the peptidase A1 family. In terms of tissue distribution, parenchymal cells surrounding the secretory glands.

The protein localises to the secreted. It carries out the reaction Similar to pepsin, but also cleaves on either side of Asp and at Lys-|-Arg.. With respect to regulation, inhibited by pepstatin and by diazoacetyl-D,L-norleucine methyl ester (DAN) in the presence of Cu(2+) ions. Its function is as follows. Extracellular proteinase found in the pitcher fluid of carnivorous plants. Digest prey for nitrogen uptake. The sequence is that of Aspartic proteinase nepenthesin-1 from Nepenthes distillatoria (Pitcher plant).